The sequence spans 115 residues: MNMLMALLVNITLSTLLIIVAFWLPQLNLYTEKANPYECGFDPMGSARLPFSMKFFLVAITFLLFDLEIALLLPLPWAIQMYNINIMMLTAFILVSVLALGLAYEWVQKGLEWTE.

3 helical membrane-spanning segments follow: residues 4 to 24 (LMALLVNITLSTLLIIVAFWL), 55 to 75 (FFLVAITFLLFDLEIALLLPL), and 84 to 104 (INIMMLTAFILVSVLALGLAY).

It belongs to the complex I subunit 3 family. Core subunit of respiratory chain NADH dehydrogenase (Complex I) which is composed of 45 different subunits. Interacts with TMEM186. Interacts with TMEM242.

The protein resides in the mitochondrion inner membrane. It catalyses the reaction a ubiquinone + NADH + 5 H(+)(in) = a ubiquinol + NAD(+) + 4 H(+)(out). Core subunit of the mitochondrial membrane respiratory chain NADH dehydrogenase (Complex I) which catalyzes electron transfer from NADH through the respiratory chain, using ubiquinone as an electron acceptor. Essential for the catalytic activity of complex I. In Peromyscus melanotis (Black-eared mouse), this protein is NADH-ubiquinone oxidoreductase chain 3.